The following is a 354-amino-acid chain: Hyaluronan and proteoglycan link protein 1 (354 aa).

The propeptide occupies 1 to 15 (MKSLLLLVLISICWA). 2 N-linked (GlcNAc...) asparagine glycosylation sites follow: asparagine 21 and asparagine 56. Positions 38-152 (PHLLVEAEQA…EGLEDDTVVV (115 aa)) constitute an Ig-like V-type domain. 5 disulfide bridges follow: cysteine 61-cysteine 139, cysteine 181-cysteine 252, cysteine 205-cysteine 226, cysteine 279-cysteine 349, and cysteine 304-cysteine 325. Link domains are found at residues 159–254 (VVFP…FCFT) and 259–351 (GRFY…YCFR).

The protein belongs to the HAPLN family. As to expression, widely expressed. Weakly expressed in the brain.

It localises to the secreted. It is found in the extracellular space. Its subcellular location is the extracellular matrix. Functionally, stabilizes the aggregates of proteoglycan monomers with hyaluronic acid in the extracellular cartilage matrix. In Homo sapiens (Human), this protein is Hyaluronan and proteoglycan link protein 1 (HAPLN1).